The chain runs to 665 residues: Methionine--tRNA ligase (665 aa).

The short motif at 12–22 (YYPSGKLHIGS) is the 'HIGH' region element. Positions 308–312 (KMSKS) match the 'KMSKS' region motif. Lys311 contributes to the ATP binding site. The tRNA-binding domain occupies 562–665 (TFDAVEIRVA…SSVPNGSIIG (104 aa)).

This sequence belongs to the class-I aminoacyl-tRNA synthetase family. MetG type 2B subfamily. In terms of assembly, homodimer.

It localises to the cytoplasm. It catalyses the reaction tRNA(Met) + L-methionine + ATP = L-methionyl-tRNA(Met) + AMP + diphosphate. Functionally, is required not only for elongation of protein synthesis but also for the initiation of all mRNA translation through initiator tRNA(fMet) aminoacylation. In Streptococcus pyogenes serotype M3 (strain SSI-1), this protein is Methionine--tRNA ligase (metG).